An 814-amino-acid chain; its full sequence is Telomere repeats-binding bouquet formation protein 1 (814 aa).

2 ARM repeats span residues 93 to 136 and 327 to 368; these read EMFR…KTSR and GGLP…GMST. 3 disordered regions span residues 461-521, 551-584, and 653-753; these read DQDS…ELKR, STPT…LSDD, and FRRS…KRQN. A coiled-coil region spans residues 488–512; that stretch reads EKSKKRKHKQKRENERSDNQETRRE. Basic and acidic residues-rich tracts occupy residues 499 to 521, 565 to 577, and 679 to 688; these read RENE…ELKR, IFRH…RNQR, and EHSTSAQEHK. Over residues 689-699 the composition is skewed to basic residues; the sequence is QKSKREKHKLS. Basic and acidic residues predominate over residues 714–741; the sequence is RPRETYSPDVKQWTDHRHLKKSSEDARS. The region spanning 746–799 is the Myb-like domain; the sequence is GRHRKRQNWSDKELCYLTKGVKRFGHSWNTILWKYPFHPGRTNVDLAKKFYHMQ.

The protein belongs to the TERB1 family. Component of the MAJIN-TERB1-TERB2 complex.

Its subcellular location is the chromosome. It localises to the telomere. It is found in the nucleus inner membrane. In terms of biological role, meiosis-specific telomere-associated protein involved in meiotic telomere attachment to the nucleus inner membrane, a crucial step for homologous pairing and synapsis. Component of the MAJIN-TERB1-TERB2 complex, which promotes telomere cap exchange by mediating attachment of telomeric DNA to the inner nuclear membrane and replacement of the protective cap of telomeric chromosomes: in early meiosis, the MAJIN-TERB1-TERB2 complex associates with telomeric DNA and the shelterin/telosome complex. During prophase, the complex matures and promotes release of the shelterin/telosome complex from telomeric DNA. In the MAJIN-TERB1-TERB2 complex, TERB1 probably mediates association with the shelterin/telosome complex. This chain is Telomere repeats-binding bouquet formation protein 1 (ccdc79), found in Danio rerio (Zebrafish).